Here is a 904-residue protein sequence, read N- to C-terminus: Transcription factor E2F7 (904 aa).

Positions 61–80 (TPDRNPITPVKPVDRQPQVE) are disordered. Serine 96 bears the Phosphoserine mark. A DNA-binding region spans residues 143 to 212 (RKQKSLGLLC…VAKNQYGWHG (70 aa)). A compositionally biased stretch (basic and acidic residues) spans 252–269 (GERRKDGSPDPRDPHLLD). Residues 252–283 (GERRKDGSPDPRDPHLLDFSEADYPSSSANSR) form a disordered region. The DNA-binding element occupies 283–368 (RKDKSLRIMS…GRKPAFKWIG (86 aa)). Position 411 is a phosphoserine (serine 411). The tract at residues 560 to 628 (LSPESRSEED…VMPKKPSSST (69 aa)) is disordered. Phosphoserine is present on serine 833. The tract at residues 846–904 (AEQSPAPATPKSIQRRHRETFFKTPGSLGDPVFRRKERNQSRNTSSAQRRLEISSSGPD) is disordered. Over residues 886 to 904 (SRNTSSAQRRLEISSSGPD) the composition is skewed to polar residues.

Belongs to the E2F/DP family. Interacts with HIF1A. Homodimer and heterodimer: mainly forms homodimers and, to a lesser extent, heterodimers with E2F8. Dimerization is important for DNA-binding. Interacts with MN1. In terms of tissue distribution, widely expressed with highest levels in skin and thymus and very low levels in brain, muscle and stomach. Expressed in trophoblast giant cells throughout placenta development (at protein level).

The protein localises to the nucleus. Functionally, atypical E2F transcription factor that participates in various processes such as angiogenesis, polyploidization of specialized cells and DNA damage response. Mainly acts as a transcription repressor that binds DNA independently of DP proteins and specifically recognizes the E2 recognition site 5'-TTTC[CG]CGC-3'. Directly represses transcription of classical E2F transcription factors such as E2F1. Acts as a regulator of S-phase by recognizing and binding the E2-related site 5'-TTCCCGCC-3' and mediating repression of G1/S-regulated genes. Plays a key role in polyploidization of cells in placenta and liver by regulating the endocycle, probably by repressing genes promoting cytokinesis and antagonizing action of classical E2F proteins (E2F1, E2F2 and/or E2F3). Required for placental development by promoting polyploidization of trophoblast giant cells. Also involved in DNA damage response: up-regulated by p53/TP53 following genotoxic stress and acts as a downstream effector of p53/TP53-dependent repression by mediating repression of indirect p53/TP53 target genes involved in DNA replication. Acts as a promoter of sprouting angiogenesis, possibly by acting as a transcription activator: associates with HIF1A, recognizes and binds the VEGFA promoter, which is different from canonical E2 recognition site, and activates expression of the VEGFA gene. Acts as a negative regulator of keratinocyte differentiation. This Mus musculus (Mouse) protein is Transcription factor E2F7 (E2f7).